The primary structure comprises 483 residues: Chromatin structure-remodeling complex protein RSC6 (483 aa).

Disordered stretches follow at residues 142-183 (KRKR…EAES) and 273-309 (AQDGSNDAEDSSNENNNKNGAGDDDGVEGSTPKDKPE). Over residues 148–158 (SLSLPLNLQQP) the composition is skewed to low complexity. The span at 171–180 (DNGEDEDSAE) shows a compositional bias: acidic residues.

This sequence to yeast SNF12. Interacts directly with RSC8. Component of the two forms of the RSC complex composed of at least either RSC1 or RSC2, and ARP7, ARP9, LDB7, NPL6, RSC3, RSC30, RSC4, RSC58, RSC6, RSC8, RSC9, SFH1, STH1, HTL1 and probably RTT102. The complexes interact with histone and histone variant components of centromeric chromatin.

The protein resides in the nucleus. In terms of biological role, component of the chromatin structure-remodeling complex (RSC), which is involved in transcription regulation and nucleosome positioning. RSC is responsible for the transfer of a histone octamer from a nucleosome core particle to naked DNA. The reaction requires ATP and involves an activated RSC-nucleosome intermediate. Remodeling reaction also involves DNA translocation, DNA twist and conformational change. As a reconfigurer of centromeric and flanking nucleosomes, RSC complex is required both for proper kinetochore function in chromosome segregation and, via a PKC1-dependent signaling pathway, for organization of the cellular cytoskeleton. This subunit is essential for mitotic growth and suppresses formamide sensitivity of the RSC8 mutants. The protein is Chromatin structure-remodeling complex protein RSC6 (RSC6) of Saccharomyces cerevisiae (strain ATCC 204508 / S288c) (Baker's yeast).